The chain runs to 495 residues: Probable staphylococcal-like nuclease CAN4 (495 aa).

Gly-2 carries N-myristoyl glycine lipidation. Residue Cys-11 is the site of S-palmitoyl cysteine attachment. Disordered stretches follow at residues Asp-45–Leu-68 and Leu-81–Pro-101. Over residues Leu-50 to Pro-66 the composition is skewed to pro residues. The TNase-like domain occupies Lys-297–Tyr-470. Position 310 (Asp-310) interacts with Ca(2+). Arg-377 is a catalytic residue. Ca(2+) is bound at residue Asp-382. Active-site residues include Glu-385 and Arg-419.

Belongs to the thermonuclease family. Requires Ca(2+) as cofactor.

The protein localises to the cell membrane. Functionally, enzyme that catalyzes the hydrolysis of both DNA and RNA at the 5' position of the phosphodiester bond. This Oryza sativa subsp. japonica (Rice) protein is Probable staphylococcal-like nuclease CAN4.